Here is a 282-residue protein sequence, read N- to C-terminus: Bis(5'-nucleosyl)-tetraphosphatase, symmetrical (282 aa).

The protein belongs to the Ap4A hydrolase family.

The enzyme catalyses P(1),P(4)-bis(5'-adenosyl) tetraphosphate + H2O = 2 ADP + 2 H(+). Functionally, hydrolyzes diadenosine 5',5'''-P1,P4-tetraphosphate to yield ADP. In Citrobacter koseri (strain ATCC BAA-895 / CDC 4225-83 / SGSC4696), this protein is Bis(5'-nucleosyl)-tetraphosphatase, symmetrical.